The primary structure comprises 137 residues: Gonadotropin subunit beta-1 (137 aa).

The N-terminal stretch at 1–24 is a signal peptide; sequence MYCTHLMTLQLVVMAMLWVTPVRA. 5 disulfide bridges follow: Cys32–Cys78, Cys46–Cys93, Cys55–Cys108, Cys59–Cys110, and Cys113–Cys120. A glycan (N-linked (GlcNAc...) asparagine) is linked at Asn36.

Belongs to the glycoprotein hormones subunit beta family. In terms of assembly, heterodimer of an alpha and a beta chain.

The protein localises to the secreted. Its function is as follows. Involved in gametogenesis and steroidogenesis. The chain is Gonadotropin subunit beta-1 (cgba) from Oncorhynchus keta (Chum salmon).